The sequence spans 450 residues: MLRLLIGLLLMSFISLQSASWQEPLRVSIEFVDLPKKIIRFPAHDLKVGEFGFVVTKLSDYEIVNSEVVIIAVENGVATAKFKAFESMKQSHLPTPRMVAKKGDLVYFRQFNNQAFLIAPNDELYEQIRATNTDINFISSDLLVTFLNGFDPKIANLRKACNVYSVGVIYIVTTNTLNILSCESFEILEKRELDTSGVTKTSTPFFSRVEGIDAGTLGKLFSGSQSKNYFAYYDALVKKEKRKEVRIEKKEERIDARENKREIKQEAIKEPKKANQGTENAPTLEEKNYQKAERKFDAKEERRRSRDERKKTKATKKAMEFEEREKEHDERDEKETEERRKALEMDKGNEKVNAKENEREINQESANEPSSENNATLKDTENTSVLKESAAKKEAPKPSSKEEKRRLKEEKKKAKAEQRAREFEQRAREHQERDEKELEERRKALEMNKK.

Composition is skewed to basic and acidic residues over residues 262–273 (EIKQEAIKEPKK), 284–310 (LEEK…DERK), and 317–362 (KAME…REIN). The segment at 262–450 (EIKQEAIKEP…RRKALEMNKK (189 aa)) is disordered. Over residues 363–386 (QESANEPSSENNATLKDTENTSVL) the composition is skewed to polar residues. The span at 389–450 (SAAKKEAPKP…RRKALEMNKK (62 aa)) shows a compositional bias: basic and acidic residues.

The protein resides in the cell surface. Functionally, binds plasminogen, specifically, and in a concentration and lysine-dependent manner. Plasminogen is the precursor of plasmin, a serine protease that cleaves fibrin, fibronectin, laminin and vitronectin. Acquisition of plasminogen/plasmin could enable H.pylori to degrade host components. The protein is Plasminogen-binding protein PgbA (pgbA) of Helicobacter pylori (strain J99 / ATCC 700824) (Campylobacter pylori J99).